The chain runs to 321 residues: GTP 3',8-cyclase (321 aa).

The region spanning 5–233 is the Radical SAM core domain; that stretch reads SFNRVIDYIR…QGSSKIYTLE (229 aa). Arg-14 contacts GTP. Positions 21 and 25 each coordinate [4Fe-4S] cluster. Residue Tyr-27 coordinates S-adenosyl-L-methionine. Position 28 (Cys-28) interacts with [4Fe-4S] cluster. Residue Arg-64 participates in GTP binding. Gly-68 is an S-adenosyl-L-methionine binding site. Residue Ser-95 participates in GTP binding. An S-adenosyl-L-methionine-binding site is contributed by Ser-119. Lys-155 provides a ligand contact to GTP. Residue Met-189 participates in S-adenosyl-L-methionine binding. The [4Fe-4S] cluster site is built by Cys-249 and Cys-252. Residue 254-256 coordinates GTP; the sequence is RIR. Cys-266 contacts [4Fe-4S] cluster.

It belongs to the radical SAM superfamily. MoaA family. In terms of assembly, monomer and homodimer. [4Fe-4S] cluster serves as cofactor.

The catalysed reaction is GTP + AH2 + S-adenosyl-L-methionine = (8S)-3',8-cyclo-7,8-dihydroguanosine 5'-triphosphate + 5'-deoxyadenosine + L-methionine + A + H(+). It participates in cofactor biosynthesis; molybdopterin biosynthesis. In terms of biological role, catalyzes the cyclization of GTP to (8S)-3',8-cyclo-7,8-dihydroguanosine 5'-triphosphate. The polypeptide is GTP 3',8-cyclase (Helicobacter pylori (strain J99 / ATCC 700824) (Campylobacter pylori J99)).